Reading from the N-terminus, the 109-residue chain is Thioredoxin 1 (109 aa).

Residues 2–109 (SDKIIHLTDD…LKEFLDANLA (108 aa)) form the Thioredoxin domain. Active-site nucleophile residues include cysteine 33 and cysteine 36. An intrachain disulfide couples cysteine 33 to cysteine 36. Lysine 70 is subject to N6-acetyllysine.

Belongs to the thioredoxin family. Monomer.

Functionally, participates in various redox reactions through the reversible oxidation of its active center dithiol to a disulfide and catalyzes dithiol-disulfide exchange reactions. This is Thioredoxin 1 (trxA) from Escherichia coli O157:H7.